The chain runs to 127 residues: MSTIPNDLKYTKSHEWIRLEADGTLTVGVTDHAQAALGDVVFLELPEAGRVVSAGEACAVIESVKAASDIYAPVAGEVIARNDSVTDAPESVNADAYAAWLFKLKPANAGDTSALLDAAGYATEIAD.

The 82-residue stretch at 24–105 (TLTVGVTDHA…AYAAWLFKLK (82 aa)) folds into the Lipoyl-binding domain. Residue lysine 65 is modified to N6-lipoyllysine.

It belongs to the GcvH family. The glycine cleavage system is composed of four proteins: P, T, L and H. It depends on (R)-lipoate as a cofactor.

In terms of biological role, the glycine cleavage system catalyzes the degradation of glycine. The H protein shuttles the methylamine group of glycine from the P protein to the T protein. The sequence is that of Glycine cleavage system H protein from Azoarcus sp. (strain BH72).